We begin with the raw amino-acid sequence, 331 residues long: CRISPR-associated endonuclease Cas1 (331 aa).

Positions 166, 228, and 243 each coordinate Mn(2+).

The protein belongs to the CRISPR-associated endonuclease Cas1 family. Homodimer, forms a heterotetramer with a Cas2 homodimer. Requires Mg(2+) as cofactor. It depends on Mn(2+) as a cofactor.

Functionally, CRISPR (clustered regularly interspaced short palindromic repeat), is an adaptive immune system that provides protection against mobile genetic elements (viruses, transposable elements and conjugative plasmids). CRISPR clusters contain spacers, sequences complementary to antecedent mobile elements, and target invading nucleic acids. CRISPR clusters are transcribed and processed into CRISPR RNA (crRNA). Acts as a dsDNA endonuclease. Involved in the integration of spacer DNA into the CRISPR cassette. The polypeptide is CRISPR-associated endonuclease Cas1 (Hyperthermus butylicus (strain DSM 5456 / JCM 9403 / PLM1-5)).